A 205-amino-acid chain; its full sequence is Proteasome subunit beta type-3 (205 aa).

Belongs to the peptidase T1B family. As to quaternary structure, the 26S proteasome consists of a 20S proteasome core and two 19S regulatory subunits. The 20S proteasome core is composed of 28 subunits that are arranged in four stacked rings, resulting in a barrel-shaped structure. The two end rings are each formed by seven alpha subunits, and the two central rings are each formed by seven beta subunits. The catalytic chamber with the active sites is on the inside of the barrel.

The protein localises to the cytoplasm. Its subcellular location is the nucleus. In terms of biological role, non-catalytic component of the proteasome, a multicatalytic proteinase complex which is characterized by its ability to cleave peptides with Arg, Phe, Tyr, Leu, and Glu adjacent to the leaving group at neutral or slightly basic pH. The proteasome has an ATP-dependent proteolytic activity. This is Proteasome subunit beta type-3 (psmB3) from Dictyostelium discoideum (Social amoeba).